A 689-amino-acid polypeptide reads, in one-letter code: Protein CFAP20DC (689 aa).

Disordered stretches follow at residues 143–179, 217–236, 241–262, 333–424, and 583–660; these read GPPP…TVEK, LPIM…NNNR, LKST…NNTN, SKES…PSEL, and SIST…LSVE. Residues 150 to 176 show a composition bias toward polar residues; the sequence is RRSNMRISSETVRSVGSKNNRSCQPST. Residues 343-359 are compositionally biased toward polar residues; sequence EESQSVPKDIFTFSSRP. The span at 394 to 405 shows a compositional bias: acidic residues; it reads SEDDFYGGDSSE. Residues 411 to 421 show a composition bias toward polar residues; the sequence is IQGSRGPTTGP. Residues 583-593 show a composition bias toward low complexity; it reads SISTSSDDTTT.

This is Protein CFAP20DC (CFAP20DC) from Macaca fascicularis (Crab-eating macaque).